We begin with the raw amino-acid sequence, 508 residues long: MGSCCSCPDKDTVPDNHRNKFKVINVDDDGNELGSGVMELTDTELILYTRKRDSVKWHYLCLRRYGYDSNLFSFESGRRCQTGQGIFAFKCARAEELFNMLQEIMQNNSINVVEEPVVERSSHQTELEVPRTPRTPTTPGLGAQNLPNGYPRYPSFGDASSHPSSRHPSVGSARLPSVGEESTHPLLVAEEQVHTYVNTTGVQEERKNRASVHVPPEARVSNAESNTPKEEPSNPEDRDPQVLLKPEGVRFVLGPTPVQKQLMEKEKLEQLGKDPVSGSGAGNTEWDTGYDSDERRDVPPVNKLVYENINGLSIPSASGVRRGRLTSTSTSDTQNINNSAQRRPALLNYENLPSLPPVWEARKLSRDEDDNLGPKTPSLNGYHNNLDPMHNYVNTENVTVPASAHKIDYSKRRDCTPTVFNFDIRRPSLEHRQLNYIQVDLEGGSDSDNPQTPKTPTTPLPQTPTRRTELYAVIDIERTAAMSNLQKALPRDDGTSRKTRHNSTDLPM.

Residue Gly-2 is the site of N-myristoyl glycine attachment. Positions 13 to 115 (VPDNHRNKFK…QNNSINVVEE (103 aa)) constitute an IRS-type PTB domain. A disordered region spans residues 116-180 (PVVERSSHQT…GSARLPSVGE (65 aa)). Basic and acidic residues predominate over residues 117–131 (VVERSSHQTELEVPR). At Ser-177 the chain carries Phosphoserine. The residue at position 196 (Tyr-196) is a Phosphotyrosine; by FGFR1. Disordered stretches follow at residues 201–243 (GVQE…PQVL) and 268–298 (LEQL…RRDV). Residues Ser-211 and Ser-221 each carry the phosphoserine modification. The segment covering 227 to 240 (TPKEEPSNPEDRDP) has biased composition (basic and acidic residues). Phosphotyrosine; by FGFR1 is present on Tyr-306. The interval 315–345 (PSASGVRRGRLTSTSTSDTQNINNSAQRRPA) is disordered. Positions 325–341 (LTSTSTSDTQNINNSAQ) are enriched in polar residues. Tyr-349 is modified (phosphotyrosine; by FGFR1). The residue at position 365 (Ser-365) is a Phosphoserine. Phosphotyrosine; by FGFR1 occurs at positions 392 and 436. A disordered region spans residues 441–467 (LEGGSDSDNPQTPKTPTTPLPQTPTRR). A Phosphotyrosine; by FGFR1 modification is found at Tyr-471. Residues 483 to 508 (SNLQKALPRDDGTSRKTRHNSTDLPM) are disordered.

As to quaternary structure, part of a complex containing FRS2, GRB2, GAB1, PIK3R1 and SOS1. Part of a complex containing GRB2 and CBL. Binds ALK, CKS2, FGFR1, RET, MAPK1/ERK2, MAPK3/ERK1 and SRC. The tyrosine-phosphorylated protein binds the SH2 domains of GRB2 and PTPN11. Interacts with NTRK1, NTRK2 and NTRK3 (phosphorylated upon ligand-binding). Identified in a complex containing FGFR4, NCAM1, CDH2, PLCG1, FRS2, SRC, SHC1, GAP43 and CTTN. Post-translationally, phosphorylated on tyrosine residues upon stimulation by FGF2 or NGFB. Phosphorylated by ULK2 (in vitro). Phosphorylated on tyrosine residues by activated ALK and FGFR1. Phosphorylated on tyrosine residues upon activation of FGFR2 and FGFR3. Phosphorylated on threonine residues by MAP kinases; this inhibits tyrosine phosphorylation, and thereby down-regulates FRS2-mediated activation of MAP kinases. In terms of processing, ubiquitinated when tyrosine phosphorylated and in a complex with GRB2. The unphosphorylated form is not subject to ubiquitination. In terms of tissue distribution, ubiquitous. Expression is highest in brain, kidney, lung and testis.

Its subcellular location is the membrane. In terms of biological role, adapter protein that links activated FGR and NGF receptors to downstream signaling pathways. Plays an important role in the activation of MAP kinases and in the phosphorylation of PIK3R1, the regulatory subunit of phosphatidylinositol 3-kinase, in response to ligand-mediated activation of FGFR1. Modulates signaling via SHC1 by competing for a common binding site on NTRK1. This Mus musculus (Mouse) protein is Fibroblast growth factor receptor substrate 2 (Frs2).